Reading from the N-terminus, the 126-residue chain is Holo-[acyl-carrier-protein] synthase (126 aa).

The Mg(2+) site is built by Asp9 and Glu58.

Belongs to the P-Pant transferase superfamily. AcpS family. Requires Mg(2+) as cofactor.

The protein localises to the cytoplasm. It carries out the reaction apo-[ACP] + CoA = holo-[ACP] + adenosine 3',5'-bisphosphate + H(+). Functionally, transfers the 4'-phosphopantetheine moiety from coenzyme A to a Ser of acyl-carrier-protein. In Citrobacter koseri (strain ATCC BAA-895 / CDC 4225-83 / SGSC4696), this protein is Holo-[acyl-carrier-protein] synthase.